We begin with the raw amino-acid sequence, 161 residues long: Protein-export protein SecB (161 aa).

This sequence belongs to the SecB family. As to quaternary structure, homotetramer, a dimer of dimers. One homotetramer interacts with 1 SecA dimer.

Its subcellular location is the cytoplasm. Functionally, one of the proteins required for the normal export of preproteins out of the cell cytoplasm. It is a molecular chaperone that binds to a subset of precursor proteins, maintaining them in a translocation-competent state. It also specifically binds to its receptor SecA. This chain is Protein-export protein SecB, found in Pseudomonas fluorescens (strain Pf0-1).